The following is a 309-amino-acid chain: D-alanine--D-alanine ligase (309 aa).

In terms of domain architecture, ATP-grasp spans 106 to 305 (KMLWKAFGLP…FEQLVVKILE (200 aa)). Position 136–191 (136–191 (VEKLGLPVMVKPSLEGSSVGLTKVKRVEDLKSAVDFALKYDDTVLIEEWLSGAEFT)) interacts with ATP. Mg(2+)-binding residues include Asp-259, Glu-272, and Asn-274.

This sequence belongs to the D-alanine--D-alanine ligase family. Requires Mg(2+) as cofactor. The cofactor is Mn(2+).

The protein resides in the cytoplasm. It catalyses the reaction 2 D-alanine + ATP = D-alanyl-D-alanine + ADP + phosphate + H(+). It functions in the pathway cell wall biogenesis; peptidoglycan biosynthesis. Cell wall formation. The polypeptide is D-alanine--D-alanine ligase (Pasteurella multocida (strain Pm70)).